A 1347-amino-acid chain; its full sequence is Protocadherin-11 X-linked (1347 aa).

Residues 1–23 form the signal peptide; the sequence is MDLLSGTYIFAVLLACVVFHSGA. Topologically, residues 24–812 are extracellular; the sequence is QEKNYTIREE…VSSPTSDYVK (789 aa). Cadherin domains lie at 26–139, 140–249, 250–355, 362–466, 467–570, 571–673, and 677–795; these read KNYT…APLF, PATV…HPVF, KETE…VPSI, NPVN…APVF, TQSF…SPVF, THNE…KPVF, and PSNY…APVT. N-linked (GlcNAc...) asparagine glycosylation is found at Asn27, Asn48, and Asn54. N-linked (GlcNAc...) asparagine glycosylation occurs at Asn344. An N-linked (GlcNAc...) asparagine glycan is attached at Asn553. Asn773 carries an N-linked (GlcNAc...) asparagine glycan. The chain crosses the membrane as a helical span at residues 813–833; sequence ILVAAVAGTITVVVVIFITAV. The Cytoplasmic portion of the chain corresponds to 834 to 1347; that stretch reads VRCRQAPHLK…DSPVMEEHPL (514 aa). Disordered stretches follow at residues 1057–1091, 1097–1116, and 1325–1347; these read LPEG…GYPQ, RATP…ESTF, and TFTP…EHPL.

It is found in the cell membrane. Potential calcium-dependent cell-adhesion protein. In Pan paniscus (Pygmy chimpanzee), this protein is Protocadherin-11 X-linked (PCDH11X).